Reading from the N-terminus, the 783-residue chain is Zinc finger protein 107 (783 aa).

The C2H2-type 1; atypical zinc finger occupies 76–98; sequence FQCNKYVKVFDKFSNSNRYKRRH. 3 consecutive C2H2-type zinc fingers follow at residues 104–126, 132–154, and 160–182; these read FKCK…RRIH, YKCE…KRIH, and YKCE…KIIH. Lysine 186 participates in a covalent cross-link: Glycyl lysine isopeptide (Lys-Gly) (interchain with G-Cter in SUMO2). The segment at 188–210 adopts a C2H2-type 5 zinc-finger fold; sequence NKCEECGKAFKQASHLTIHKIIH. The segment at 216–238 adopts a C2H2-type 6; atypical zinc-finger fold; sequence YKYEECGKVFSQSSHLTTQKILH. A C2H2-type 7 zinc finger spans residues 244-266; sequence YKCKECGKAFNLFSNLTNHKRIH. Residues 272–294 form a C2H2-type 8; atypical zinc finger; the sequence is YKCKECGRAFNISSNLNKQEKIH. The C2H2-type 9; atypical zinc-finger motif lies at 300–322; that stretch reads NKCEECDKAFNRSLKLTAHKKIL. C2H2-type zinc fingers lie at residues 328–350 and 356–378; these read YKCE…KIIH and YKCK…KKIH. The C2H2-type 12; atypical zinc finger occupies 384–406; the sequence is YKCEECGKAFNQHSNLINHRKIY. 4 consecutive C2H2-type zinc fingers follow at residues 412-434, 440-462, 468-490, and 496-518; these read YKCE…KKIH, YKCE…KRIH, and YKCE…KIVH. The C2H2-type 17; atypical zinc-finger motif lies at 524-546; sequence NKCEEFGKAFKQSSHRTIHKIIH. The C2H2-type 18; atypical zinc-finger motif lies at 552-574; sequence YKCEEHGKVFNQSSNLTTQKIIH. The C2H2-type 19; atypical zinc-finger motif lies at 580–602; the sequence is YKFEEHGKAFNLFSNITNHKIIY. C2H2-type zinc fingers lie at residues 608-630, 636-658, 664-686, 692-714, and 720-742; these read HKCE…KRIH, YQCA…KIIH, YKCK…KKIH, YKCE…KKIH, and YKCE…KIIH. The segment at 748–770 adopts a C2H2-type 25; atypical zinc-finger fold; it reads YKCGDYGRAFNLSSNLTTHKKIH.

This sequence belongs to the krueppel C2H2-type zinc-finger protein family. Expressed in brain, heart, skeletal muscle, kidney and pancreas. Weakly expressed in aorta, liver and lung.

It localises to the nucleus. Its function is as follows. May be involved in transcriptional regulation. The polypeptide is Zinc finger protein 107 (ZNF107) (Homo sapiens (Human)).